A 104-amino-acid polypeptide reads, in one-letter code: Pyrimidine/purine nucleoside phosphorylase (104 aa).

This sequence belongs to the nucleoside phosphorylase PpnP family.

The catalysed reaction is a purine D-ribonucleoside + phosphate = a purine nucleobase + alpha-D-ribose 1-phosphate. It catalyses the reaction adenosine + phosphate = alpha-D-ribose 1-phosphate + adenine. It carries out the reaction cytidine + phosphate = cytosine + alpha-D-ribose 1-phosphate. The enzyme catalyses guanosine + phosphate = alpha-D-ribose 1-phosphate + guanine. The catalysed reaction is inosine + phosphate = alpha-D-ribose 1-phosphate + hypoxanthine. It catalyses the reaction thymidine + phosphate = 2-deoxy-alpha-D-ribose 1-phosphate + thymine. It carries out the reaction uridine + phosphate = alpha-D-ribose 1-phosphate + uracil. The enzyme catalyses xanthosine + phosphate = alpha-D-ribose 1-phosphate + xanthine. Functionally, catalyzes the phosphorolysis of diverse nucleosides, yielding D-ribose 1-phosphate and the respective free bases. Can use uridine, adenosine, guanosine, cytidine, thymidine, inosine and xanthosine as substrates. Also catalyzes the reverse reactions. The polypeptide is Pyrimidine/purine nucleoside phosphorylase (Geobacter metallireducens (strain ATCC 53774 / DSM 7210 / GS-15)).